The primary structure comprises 239 residues: Phosphoribosylaminoimidazole-succinocarboxamide synthase (239 aa).

It belongs to the SAICAR synthetase family.

It carries out the reaction 5-amino-1-(5-phospho-D-ribosyl)imidazole-4-carboxylate + L-aspartate + ATP = (2S)-2-[5-amino-1-(5-phospho-beta-D-ribosyl)imidazole-4-carboxamido]succinate + ADP + phosphate + 2 H(+). It participates in purine metabolism; IMP biosynthesis via de novo pathway; 5-amino-1-(5-phospho-D-ribosyl)imidazole-4-carboxamide from 5-amino-1-(5-phospho-D-ribosyl)imidazole-4-carboxylate: step 1/2. The chain is Phosphoribosylaminoimidazole-succinocarboxamide synthase from Psychrobacter sp. (strain PRwf-1).